The following is a 71-amino-acid chain: Prokaryotic ubiquitin-like protein Pup (71 aa).

The tract at residues 1–30 (MPSASGHHQIPAETQRHDDDQTQETAQGLS) is disordered. The stretch at 23 to 56 (QETAQGLSAAAMLAQEQADDLDAILDDIETVLET) forms a coiled coil. The tract at residues 27–65 (QGLSAAAMLAQEQADDLDAILDDIETVLETNAEEYVSSF) is ARC ATPase binding. Residue Glu-71 forms an Isoglutamyl lysine isopeptide (Glu-Lys) (interchain with K-? in acceptor proteins) linkage.

The protein belongs to the prokaryotic ubiquitin-like protein family. In terms of assembly, strongly interacts with the proteasome-associated ATPase ARC through a hydrophobic interface; the interacting region of Pup lies in its C-terminal half. There is one Pup binding site per ARC hexamer ring.

Its pathway is protein degradation; proteasomal Pup-dependent pathway. Functionally, protein modifier that is covalently attached to lysine residues of substrate proteins, thereby targeting them for proteasomal degradation. The tagging system is termed pupylation. This is Prokaryotic ubiquitin-like protein Pup from Bifidobacterium animalis subsp. lactis (strain AD011).